The primary structure comprises 356 residues: Histidinol-phosphate aminotransferase 1 (356 aa).

Lysine 213 carries the N6-(pyridoxal phosphate)lysine modification.

The protein belongs to the class-II pyridoxal-phosphate-dependent aminotransferase family. Histidinol-phosphate aminotransferase subfamily. As to quaternary structure, homodimer. Requires pyridoxal 5'-phosphate as cofactor.

The catalysed reaction is L-histidinol phosphate + 2-oxoglutarate = 3-(imidazol-4-yl)-2-oxopropyl phosphate + L-glutamate. The protein operates within amino-acid biosynthesis; L-histidine biosynthesis; L-histidine from 5-phospho-alpha-D-ribose 1-diphosphate: step 7/9. In Burkholderia pseudomallei (strain K96243), this protein is Histidinol-phosphate aminotransferase 1.